Reading from the N-terminus, the 316-residue chain is Retinol dehydrogenase 12 (316 aa).

NADP(+) is bound at residue 46–52 (GANTGIG). Position 175 (S175) interacts with substrate. Y200 (proton acceptor) is an active-site residue.

Belongs to the short-chain dehydrogenases/reductases (SDR) family. In terms of tissue distribution, widely expressed, mostly in retina, kidney, brain, skeletal muscle, pancreas and stomach.

It localises to the endoplasmic reticulum membrane. The enzyme catalyses all-trans-retinol + NADP(+) = all-trans-retinal + NADPH + H(+). The catalysed reaction is 11-cis-retinol + NADP(+) = 11-cis-retinal + NADPH + H(+). It catalyses the reaction 9-cis-retinol + NADP(+) = 9-cis-retinal + NADPH + H(+). It carries out the reaction a 4-hydroxynonen-1-ol + NADP(+) = a 4-hydroxynonenal + NADPH + H(+). The enzyme catalyses (E)-non-2-en-1-ol + NADP(+) = (E)-non-2-enal + NADPH + H(+). The catalysed reaction is (Z)-non-6-en-1-ol + NADP(+) = (Z)-non-6-enal + NADPH + H(+). It catalyses the reaction nonan-1-ol + NADP(+) = nonanal + NADPH + H(+). It functions in the pathway cofactor metabolism; retinol metabolism. Retinoids dehydrogenase/reductase with a clear preference for NADP. Displays high activity towards 9-cis, 11-cis and all-trans-retinal. Shows very weak activity towards 13-cis-retinol. Also exhibits activity, albeit with lower affinity than for retinaldehydes, towards lipid peroxidation products (C9 aldehydes) such as 4-hydroxynonenal and trans-2-nonenal. May play an important function in photoreceptor cells to detoxify 4-hydroxynonenal and potentially other toxic aldehyde products resulting from lipid peroxidation. Has no dehydrogenase activity towards steroids. The chain is Retinol dehydrogenase 12 (RDH12) from Homo sapiens (Human).